The sequence spans 227 residues: dTTP/UTP pyrophosphatase (227 aa).

The segment at 1–21 (MNDLPRAELPGSGSPNPESLI) is disordered. Catalysis depends on Asp-87, which acts as the Proton acceptor.

This sequence belongs to the Maf family. YhdE subfamily. A divalent metal cation serves as cofactor.

The protein localises to the cytoplasm. The catalysed reaction is dTTP + H2O = dTMP + diphosphate + H(+). It catalyses the reaction UTP + H2O = UMP + diphosphate + H(+). Functionally, nucleoside triphosphate pyrophosphatase that hydrolyzes dTTP and UTP. May have a dual role in cell division arrest and in preventing the incorporation of modified nucleotides into cellular nucleic acids. In Rhodopirellula baltica (strain DSM 10527 / NCIMB 13988 / SH1), this protein is dTTP/UTP pyrophosphatase.